Reading from the N-terminus, the 358-residue chain is Chondroadherin (358 aa).

An N-terminal signal peptide occupies residues 1-20 (MARVLLLSLVFLAILLPALA). One can recognise an LRRNT domain in the interval 21–50 (ACPQNCHCHGDLQHVICDKVGLQKIPKVSE). Cysteines 22 and 37 form a disulfide. 10 LRR repeats span residues 51–72 (TTKL…SFRT), 75–96 (NLVS…AFRG), 99–120 (QLIY…AFDD), 123–144 (ELTY…LLSP), 147–168 (NLFI…AFQG), 171–192 (DLRW…SLDD), 195–216 (NLAK…ALSK), 219–240 (VVEE…AFQS), 244–265 (YLET…AFAG), and 268–289 (TLKH…FPFD). Ser-143 carries O-linked (GalNAc...) serine glycosylation. Residues 299 to 347 (NPWKCTCQLRGLRRWLEAKTSRPDATCSSPAKFKGQRIRDTDALRSCKS) form the LRRCT domain. 2 cysteine pairs are disulfide-bonded: Cys-303-Cys-345 and Cys-305-Cys-325. Positions 321–358 (PDATCSSPAKFKGQRIRDTDALRSCKSPTKRSKKAGRH) are disordered. Residues 348–358 (PTKRSKKAGRH) are compositionally biased toward basic residues.

It belongs to the small leucine-rich proteoglycan (SLRP) family. SLRP class IV subfamily. As to quaternary structure, mostly monomeric. Present in femoral head and rib cartilage, as well as in tendon. Detected in bone marrow.

It is found in the secreted. The protein localises to the extracellular space. The protein resides in the extracellular matrix. In terms of biological role, promotes attachment of chondrocytes, fibroblasts, and osteoblasts. This binding is mediated (at least for chondrocytes and fibroblasts) by the integrin alpha(2)beta(1). May play an important role in the regulation of chondrocyte growth and proliferation. In Rattus norvegicus (Rat), this protein is Chondroadherin (Chad).